The sequence spans 503 residues: Na(+)-translocating NADH-quinone reductase subunit B (503 aa).

The next 5 membrane-spanning stretches (helical) occupy residues 55–75 (MMLV…NSGL), 94–114 (ISGF…VPIL), 120–140 (IFIP…VLFA), 161–181 (TLPP…GIVV), and 186–206 (FGGT…FLFF). Thr248 is modified (FMN phosphoryl threonine). The next 5 helical transmembrane spans lie at 361–381 (TSTF…IASW), 386–406 (AFGI…VLIV), 417–437 (FFIP…LVFM), 452–472 (WIYG…NPAY), and 475–495 (GVML…YFAV).

Belongs to the NqrB/RnfD family. As to quaternary structure, composed of six subunits; NqrA, NqrB, NqrC, NqrD, NqrE and NqrF. Requires FMN as cofactor.

It is found in the cell inner membrane. It catalyses the reaction a ubiquinone + n Na(+)(in) + NADH + H(+) = a ubiquinol + n Na(+)(out) + NAD(+). Functionally, NQR complex catalyzes the reduction of ubiquinone-1 to ubiquinol by two successive reactions, coupled with the transport of Na(+) ions from the cytoplasm to the periplasm. NqrA to NqrE are probably involved in the second step, the conversion of ubisemiquinone to ubiquinol. This Chlamydia pneumoniae (Chlamydophila pneumoniae) protein is Na(+)-translocating NADH-quinone reductase subunit B.